The following is a 494-amino-acid chain: Tyrosinase (494 aa).

Residues His-38, His-53, Cys-64, His-224, His-228, and His-256 each coordinate Cu cation.

This sequence belongs to the tyrosinase family. The cofactor is Cu(2+).

It catalyses the reaction 2 L-dopa + O2 = 2 L-dopaquinone + 2 H2O. It carries out the reaction L-tyrosine + O2 = L-dopaquinone + H2O. This Rhizobium meliloti (Ensifer meliloti) protein is Tyrosinase (mepA).